A 306-amino-acid chain; its full sequence is D-alanine--D-alanine ligase B (306 aa).

Active-site residues include glutamate 15 and serine 150. An ATP-grasp domain is found at 101-303 (KLLWQGAGLP…FSQLVVRILE (203 aa)). 134-189 (ISSLGLPVIVKPSREGSSVGMSKVVAENALQDALRLAFQHDEEVLIEKWLSGPEFT) contributes to the ATP binding site. Aspartate 257, glutamate 270, and asparagine 272 together coordinate Mg(2+). Residue serine 281 is part of the active site.

This sequence belongs to the D-alanine--D-alanine ligase family. As to quaternary structure, monomer. Mg(2+) serves as cofactor. The cofactor is Mn(2+).

The protein resides in the cytoplasm. It catalyses the reaction 2 D-alanine + ATP = D-alanyl-D-alanine + ADP + phosphate + H(+). Its pathway is cell wall biogenesis; peptidoglycan biosynthesis. Cell wall formation. This is D-alanine--D-alanine ligase B from Escherichia coli O6:H1 (strain CFT073 / ATCC 700928 / UPEC).